The sequence spans 178 residues: ATP-dependent protease subunit HslV (178 aa).

Residue Thr7 is part of the active site. Residues Gly162, Cys165, and Thr168 each coordinate Na(+).

This sequence belongs to the peptidase T1B family. HslV subfamily. As to quaternary structure, a double ring-shaped homohexamer of HslV is capped on each side by a ring-shaped HslU homohexamer. The assembly of the HslU/HslV complex is dependent on binding of ATP.

Its subcellular location is the cytoplasm. The enzyme catalyses ATP-dependent cleavage of peptide bonds with broad specificity.. With respect to regulation, allosterically activated by HslU binding. Protease subunit of a proteasome-like degradation complex believed to be a general protein degrading machinery. This is ATP-dependent protease subunit HslV from Burkholderia lata (strain ATCC 17760 / DSM 23089 / LMG 22485 / NCIMB 9086 / R18194 / 383).